Consider the following 487-residue polypeptide: MKYKSIMLLGTASSVGKSTVAAAFCRYFKKKGYRVAPYKALNISLNSFVTKEGDEIGRAQVVQAEACEIDPKEYMNPILMKPSAGFKTQVIVRGKVHCTMDAYKYKELNKYLKEKAKEAYDDISNDYDLIVLEGSGSCAEINLRETDIANMHTAKIADADVILVADINRGGVFASIVGTIMLLTEEERKRVKGVIINKFRGKREFFEPAMRQIEEIIKIPVLGVMPYFDLDIEEEDSASIKLRKGNGKGIDIAIVRLPHMSNFTDFNSLGRIKDVGIRYAENPKDLENANMIIIPGSKNTIDDLIYLKESGFKEALINESSNGKLIFGICGGYQILGEKIIDSLGVEGDIREEEGLGLLNIVTSFNKEKTTKQVVAFDLEGNEVSGYEIHNGESVPTAKENIWIKEKNGNVLGMNNKEQNVFGTYIHGIFDEGDFGEKLINKLKKELNIEESNEVNYKDYKMSQYDKLCELLEENIDMAYVENLIRS.

Residues Gly-249–Phe-435 enclose the GATase cobBQ-type domain. Cys-330 functions as the Nucleophile in the catalytic mechanism. His-427 is a catalytic residue.

It belongs to the CobB/CobQ family. CobQ subfamily.

Its pathway is cofactor biosynthesis; adenosylcobalamin biosynthesis. Catalyzes amidations at positions B, D, E, and G on adenosylcobyrinic A,C-diamide. NH(2) groups are provided by glutamine, and one molecule of ATP is hydrogenolyzed for each amidation. This Clostridium perfringens (strain ATCC 13124 / DSM 756 / JCM 1290 / NCIMB 6125 / NCTC 8237 / Type A) protein is Cobyric acid synthase.